The following is a 171-amino-acid chain: Siroheme decarboxylase NirH subunit (171 aa).

The protein belongs to the Ahb/Nir family. As to quaternary structure, probably forms a complex composed of NirD, NirL, NirG and NirH. All proteins are required for the total conversion of siroheme to didecarboxysiroheme.

It carries out the reaction siroheme + 2 H(+) = 12,18-didecarboxysiroheme + 2 CO2. Its pathway is porphyrin-containing compound metabolism. Involved in heme d1 biosynthesis. Catalyzes the decarboxylation of siroheme into didecarboxysiroheme. The polypeptide is Siroheme decarboxylase NirH subunit (Pseudomonas aeruginosa (strain ATCC 15692 / DSM 22644 / CIP 104116 / JCM 14847 / LMG 12228 / 1C / PRS 101 / PAO1)).